The primary structure comprises 107 residues: MMKVLVVVALLATLISYSSSEGIDDLEADELLSLMANEQTRKECIPKHHECTSNKHGCCRGNFFKYKCQCTTVVTQDGEQTERCFCGTPPHHKAAELVVGFGKKIFG.

The N-terminal stretch at 1-20 (MMKVLVVVALLATLISYSSS) is a signal peptide. A propeptide spanning residues 21–41 (EGIDDLEADELLSLMANEQTR) is cleaved from the precursor. 4 disulfides stabilise this stretch: Cys-44/Cys-59, Cys-51/Cys-68, Cys-58/Cys-86, and Cys-70/Cys-84.

The protein belongs to the neurotoxin 19 (CSTX) family. 04 (U1-Lctx) subfamily. As to expression, expressed by the venom gland.

It localises to the secreted. This chain is U1-lycotoxin-Ls1b, found in Lycosa singoriensis (Wolf spider).